The following is a 238-amino-acid chain: Neuromodulin (238 aa).

The tract at residues 1-238 (MLCCMRRTKQ…EEPEADQEHA (238 aa)) is disordered. 2 S-palmitoyl cysteine lipidation sites follow: Cys-3 and Cys-4. Positions 9-32 (KQVEKNDEDQKIEQDGIKPEDKAH) are enriched in basic and acidic residues. The IQ domain maps to 31–60 (AHKAATKIQASFRGHITRKKLKGEKKDDAQ). Ser-41 is subject to Phosphoserine; by PHK and PKC. Residues 54 to 83 (EKKDDAQAAEAEANKKDEAPVADGVEKKGE) show a composition bias toward basic and acidic residues. Over residues 84–95 (GTTATEAAPATG) the composition is skewed to low complexity. Residues 97–116 (KPDEPGKAGETPSEEKKGEG) are compositionally biased toward basic and acidic residues. The segment covering 119–130 (ATEQAAPQAPAS) has biased composition (low complexity). The span at 139-154 (ETESATKASTDNSPSS) shows a compositional bias: polar residues. Residues Ser-151, Ser-153, and Ser-154 each carry the phosphoserine modification. The segment covering 155–167 (KAEDAPAKEEPKQ) has biased composition (basic and acidic residues). Residues 168–199 (ADVPAAVTAAAATTPAAEDAAAKATAQPPTET) are compositionally biased toward low complexity. Position 181 is a phosphothreonine (Thr-181). Ser-202 and Ser-203 each carry phosphoserine; by CK2. Over residues 213–225 (DETKPKESARQDE) the composition is skewed to basic and acidic residues. Over residues 226–238 (GKEEEPEADQEHA) the composition is skewed to acidic residues.

It belongs to the neuromodulin family. Identified in a complex containing FGFR4, NCAM1, CDH2, PLCG1, FRS2, SRC, SHC1, GAP43 and CTTN. Interacts (via IQ domain) with calmodulin. Binds calmodulin with a greater affinity in the absence of Ca(2+) than in its presence. Post-translationally, phosphorylated. Phosphorylation of this protein by a protein kinase C is specifically correlated with certain forms of synaptic plasticity. Palmitoylated by ZDHHC3. Palmitoylation is regulated by ARF6 and is essential for plasma membrane association and axonal and dendritic filopodia induction. Deacylated by LYPLA2.

The protein localises to the cell membrane. The protein resides in the cell projection. Its subcellular location is the growth cone membrane. It is found in the synapse. It localises to the filopodium membrane. The protein localises to the perikaryon. The protein resides in the dendrite. Its subcellular location is the axon. It is found in the cytoplasm. This protein is associated with nerve growth. It is a major component of the motile 'growth cones' that form the tips of elongating axons. Plays a role in axonal and dendritic filopodia induction. This Macaca fascicularis (Crab-eating macaque) protein is Neuromodulin (GAP43).